The sequence spans 51 residues: MKMKKCPKCGKYTLKDFCSECNEKSVTVKPPKFSPVDKYGKYRRALKKAKM.

The protein belongs to the NOP10 family.

In terms of biological role, involved in ribosome biogenesis; more specifically in 18S rRNA pseudouridylation and in cleavage of pre-rRNA. This is Ribosome biogenesis protein Nop10 from Methanococcus maripaludis (strain C6 / ATCC BAA-1332).